The primary structure comprises 616 residues: Zinc metalloproteinase-disintegrin-like protein H3 (616 aa).

Residues methionine 1–serine 20 form the signal peptide. Positions isoleucine 21–proline 193 are excised as a propeptide. Glutamate 194 is modified (pyrrolidone carboxylic acid (Glu)). In terms of domain architecture, Peptidase M12B spans lysine 203 to proline 399. 3 disulfide bridges follow: cysteine 314/cysteine 394, cysteine 354/cysteine 378, and cysteine 356/cysteine 361. Histidine 339 lines the Zn(2+) pocket. Residues histidine 339–aspartate 350 carry the Metal-binding motif. The active-site Proton acceptor is the glutamate 340. Positions 343 and 349 each coordinate Zn(2+). The N-linked (GlcNAc...) asparagine glycan is linked to asparagine 377. Residues proline 407–asparagine 493 enclose the Disintegrin domain. Residues valine 409, asparagine 412, glutamate 416, glutamate 419, and aspartate 422 each contribute to the Ca(2+) site. Disulfide bonds link cysteine 410–cysteine 439, cysteine 421–cysteine 434, cysteine 423–cysteine 429, cysteine 433–cysteine 456, cysteine 447–cysteine 453, cysteine 452–cysteine 478, cysteine 465–cysteine 485, cysteine 472–cysteine 504, cysteine 497–cysteine 509, cysteine 516–cysteine 566, cysteine 531–cysteine 577, cysteine 544–cysteine 554, cysteine 561–cysteine 603, and cysteine 597–cysteine 609. The D/ECD-tripeptide signature appears at glutamate 471 to aspartate 473. Positions 473, 476, and 488 each coordinate Ca(2+). Residue asparagine 506 is glycosylated (N-linked (GlcNAc...) asparagine).

The protein belongs to the venom metalloproteinase (M12B) family. P-III subfamily. P-IIIc sub-subfamily. In terms of assembly, homodimer; disulfide-linked. Zn(2+) is required as a cofactor. In terms of processing, N-glycosylated. Post-translationally, the N-terminus is blocked. In terms of tissue distribution, expressed by the venom gland (at protein level). Expressed by the venom gland.

It is found in the secreted. With respect to regulation, the proteolytic activity requires Zn(2+) and Ca(2+) ions. The alpha-fibrinogenase activity is completely inhibited by EDTA, but not by PMSF. In terms of biological role, zinc metalloprotease that has fibrinogenolytic and hemorrhagic activities. Cleaves insulin B chain readily at '38-Ala-|-Leu-39' bond, and at a significantly slower rate, at '40-Tyr-|-Leu-41' bond. Hydrolyzes isolated extracellular matrix (ECM) bovine fibronectin, and basal membrane (BM) proteins human collagen IV and, to a lesser extent, murine laminin, in vitro. Cleaves murine nidogen (at '350-Ser-|-Phe-351' and '380-Tyr-|-Asn-381' bonds), but not laminin, in a solubilized BM preparation. Hydrolyzes plasma proteins involved in blood coagulation in vitro. It significantly prolongs thrombin time. Has potent alpha-fibrinogenase activity cleaving human fibrinogen alpha chain at '432-Lys-|-Leu-433' bond, but does not cleave beta or gamma chains. Hydrolyzes bovine prothrombin, but does not cleave it at '366-Arg-|-Ile-367' bond, which is necessary for the formation of active alpha-thrombin, however, the cleavage of fragment 1 from it leads to reduced alpha-thrombin formation. Hydrolyzes bovine factor X heavy chain at '211-Ser-|-Leu-212', '213-Asp-|-Leu-214' and '216-Gly-|-Leu-217' bonds activating it only marginally as does not cleave at the physiological activation site. Does not cleave factor X light chain. No hydrolysis or activation of plasminogen. The alpha-fibrinogenase activity likely contributes to its hemorrhagic activity, which in rat can be completely neutralized in vivo by anti-ammodytagin antibodies, which strongly cross-react with this protein. Has very weak collagen-, ADP- and ristocetin-induced platelet aggregation inhibition activity in vitro. The protein is Zinc metalloproteinase-disintegrin-like protein H3 of Vipera ammodytes ammodytes (Western sand viper).